The sequence spans 88 residues: Small ribosomal subunit protein bS16c (88 aa).

This sequence belongs to the bacterial ribosomal protein bS16 family.

It is found in the plastid. It localises to the chloroplast. In Citrus sinensis (Sweet orange), this protein is Small ribosomal subunit protein bS16c.